A 228-amino-acid polypeptide reads, in one-letter code: Prolactin (228 aa).

The first 29 residues, 1 to 29, serve as a signal peptide directing secretion; it reads MGTKRSSLKGSLLLLLLMSSLFLFKSVES. A disulfide bridge connects residues C33 and C40. 3 positions are modified to phosphoserine: S55, S63, and S119. 2 disulfides stabilise this stretch: C87–C203 and C220–C228.

Belongs to the somatotropin/prolactin family. As to quaternary structure, interacts with PRLR.

The protein localises to the secreted. Its function is as follows. Prolactin acts primarily on the mammary gland by promoting lactation, mammogenesis, mitogenesis and osmoregulation. The sequence is that of Prolactin (PRL) from Trichosurus vulpecula (Brush-tailed possum).